The primary structure comprises 380 residues: Large ribosomal subunit protein mL38 (380 aa).

The N-terminal 26 residues, 1–26 (MAAPWWRAALCECRRWRGFSTSAVLG), are a transit peptide targeting the mitochondrion. The stretch at 99 to 127 (RTQQLLERKQAIQELRANVEEERAARLRT) forms a coiled coil.

Belongs to the phosphatidylethanolamine-binding protein family. Mitochondrion-specific ribosomal protein mL38 subfamily. Component of the mitochondrial large ribosomal subunit (mt-LSU). Mature mammalian 55S mitochondrial ribosomes consist of a small (28S) and a large (39S) subunit. The 28S small subunit contains a 12S ribosomal RNA (12S mt-rRNA) and 30 different proteins. The 39S large subunit contains a 16S rRNA (16S mt-rRNA), a copy of mitochondrial valine transfer RNA (mt-tRNA(Val)), which plays an integral structural role, and 52 different proteins. mL38 is located at the central protuberance.

It localises to the mitochondrion. The chain is Large ribosomal subunit protein mL38 (MRPL38) from Homo sapiens (Human).